The primary structure comprises 311 residues: Probable manganese-dependent inorganic pyrophosphatase (311 aa).

His-9, Asp-13, Asp-15, Asp-77, His-99, and Asp-151 together coordinate Mn(2+).

Belongs to the PPase class C family. It depends on Mn(2+) as a cofactor.

It localises to the cytoplasm. The catalysed reaction is diphosphate + H2O = 2 phosphate + H(+). In Streptococcus sanguinis (strain SK36), this protein is Probable manganese-dependent inorganic pyrophosphatase.